The primary structure comprises 968 residues: Alanine--tRNA ligase, cytoplasmic (968 aa).

Met1 carries the post-translational modification N-acetylmethionine. Ser3 carries the phosphoserine modification. An N6-acetyllysine modification is found at Lys19. Residues Arg77, His95, Trp176, and 214–216 contribute to the ATP site; that span reads IWN. L-alanine is bound by residues Asn216 and Asp239. Gly243 is a binding site for ATP. Residues Ser399 and Ser555 each carry the phosphoserine modification. Residues His605, His609, Cys723, and His727 each contribute to the Zn(2+) site. Positions 750–763 match the Nuclear localization signal motif; it reads RRIVAVTGAEAQKA. Lys876 is subject to N6-acetyllysine. Residue Lys943 is modified to N6,N6,N6-trimethyllysine; alternate. Position 943 is an N6,N6-dimethyllysine; alternate (Lys943). Lys943 is modified (N6-methyllysine; alternate).

This sequence belongs to the class-II aminoacyl-tRNA synthetase family. As to quaternary structure, monomer. Interacts with ANKRD16; the interaction is direct. Zn(2+) serves as cofactor. In terms of processing, ISGylated. Post-translationally, methylation at 'Lys-943' by METTL21C.

The protein resides in the cytoplasm. It localises to the nucleus. It carries out the reaction tRNA(Ala) + L-alanine + ATP = L-alanyl-tRNA(Ala) + AMP + diphosphate. It catalyses the reaction (S)-lactate + ATP + H(+) = (S)-lactoyl-AMP + diphosphate. The catalysed reaction is (S)-lactoyl-AMP + L-lysyl-[protein] = N(6)-[(S)-lactoyl]-L-lysyl-[protein] + AMP + 2 H(+). With respect to regulation, the protein lactyltransferase activity is inhibited by beta-alanine. Functionally, catalyzes the attachment of alanine to tRNA(Ala) in a two-step reaction: alanine is first activated by ATP to form Ala-AMP and then transferred to the acceptor end of tRNA(Ala). Also edits incorrectly charged tRNA(Ala) via its editing domain. In presence of high levels of lactate, also acts as a protein lactyltransferase that mediates lactylation of lysine residues in target proteins, such as TEAD1, TP53/p53 and YAP1. Protein lactylation takes place in a two-step reaction: lactate is first activated by ATP to form lactate-AMP and then transferred to lysine residues of target proteins. Acts as an inhibitor of TP53/p53 activity by catalyzing lactylation of TP53/p53. Acts as a positive regulator of the Hippo pathway by mediating lactylation of TEAD1 and YAP1. The chain is Alanine--tRNA ligase, cytoplasmic (Aars1) from Rattus norvegicus (Rat).